Consider the following 234-residue polypeptide: Sugar fermentation stimulation protein homolog (234 aa).

The protein belongs to the SfsA family.

The protein is Sugar fermentation stimulation protein homolog of Edwardsiella ictaluri (strain 93-146).